A 575-amino-acid polypeptide reads, in one-letter code: Alpha-(1,6)-fucosyltransferase (575 aa).

The Cytoplasmic segment spans residues 1 to 9 (MRAWTGSWR). Residues 10–30 (WIMLILFAWGTLLFYIGGHLV) traverse the membrane as a helical; Signal-anchor for type II membrane protein segment. Over 31-575 (RDNDHPDHSS…KYPTYPEAEK (545 aa)) the chain is Lumenal. 3 disulfide bridges follow: Cys-204/Cys-266, Cys-212/Cys-230, and Cys-218/Cys-222. The GT23 domain occupies 206–493 (KARKLVCNIN…PDASANFHSL (288 aa)). A Phosphoserine modification is found at Ser-278. Residues 299–305 (PRPPYLP) carry the SH3-binding motif. The segment at 365–366 (RR) is important for donor substrate binding. The cysteines at positions 465 and 472 are disulfide-linked. The SH3 domain occupies 502–563 (QNAHNQIAVY…PSYKVREKIE (62 aa)).

Belongs to the glycosyltransferase 23 family. In terms of processing, tyrosine phosphorylated by PKDCC/VLK.

Its subcellular location is the golgi apparatus. It is found in the golgi stack membrane. The enzyme catalyses N(4)-{beta-D-GlcNAc-(1-&gt;2)-alpha-D-Man-(1-&gt;3)-[beta-D-GlcNAc-(1-&gt;2)-alpha-D-Man-(1-&gt;6)]-beta-D-Man-(1-&gt;4)-beta-D-GlcNAc-(1-&gt;4)-beta-D-GlcNAc}-L-asparaginyl-[protein] + GDP-beta-L-fucose = an N(4)-{beta-D-GlcNAc-(1-&gt;2)-alpha-D-Man-(1-&gt;3)-[beta-D-GlcNAc-(1-&gt;2)-alpha-D-Man-(1-&gt;6)]-beta-D-Man-(1-&gt;4)-beta-D-GlcNAc-(1-&gt;4)-[alpha-L-Fuc-(1-&gt;6)]-beta-D-GlcNAc}-L-asparaginyl-[protein] + GDP + H(+). It functions in the pathway protein modification; protein glycosylation. In terms of biological role, catalyzes the addition of fucose in alpha 1-6 linkage to the first GlcNAc residue, next to the peptide chains in N-glycans. The protein is Alpha-(1,6)-fucosyltransferase (Fut8) of Rattus norvegicus (Rat).